Reading from the N-terminus, the 410-residue chain is MISVSDKNEVKRIIHTEDWPKSELIYGNFRQNPARPTLIAFTDKKAYAERKRLISGWFGLRYIRSLQPLMQQCINESIASIERAIDTAGGIVDMQNLCTGTAVDIIGTTIFGQSFDVVKNGSHPLPDYLRKMLKASGLLLFMPWIRSIPFRPTRPAYIDRFTLDIMEKRRATAKSAPRQDLLQKLVEQLDDAAGSKFTPFDVQGEVTIMLVAGTETTANSELFTLLMLVRHPDKLRRVYAEVDAWYPPGDLATPVDCEYSLQGMTYLQACEDEAMRLVPAQATGSPRESRRDEVVLGYRVPAGTTVFPTTQGVHHDESVWKDASEYVPERWLEIYEKGKVTEQHFWPFSAGSRVCIGKHFALQEMHLMLVNLLRRFEFEYVPGQPETTVFRVAQHMEAPKYVMKVRRRKF.

Residue C355 participates in heme binding.

Belongs to the cytochrome P450 family. Heme is required as a cofactor.

Its pathway is secondary metabolite biosynthesis. Cytochrome P450 monooxygenase; part of the gene cluster that mediates the biosynthesis of macrophasetins, 3-decalinoyltetramic acids (DTAs) which feature a tetramate (pyrrolidine-2,4-dione) unit connected to a decalin fragment and that have potent bioactivities. The PKS-NRPS mpsA together with its associated enoylreductase partner mpsG incorporate one unit of acetyl-CoA, seven units of malonyl-CoA, and one unit of L-alanine to assemble the linear tetramic acid intermediate corresponding to the backbone of macrophasetins. Without the Diels-Alderase mpsD, the mpsA/G product can undergo the non-enzymatic intramolecular Diels-Alder (IMDA) reaction to generate both macrophasetin A and macrophasetin B. Catalyzed by mpsD, the linear tetramic acid intermediate is thoroughly converted to macrophasetin A via the endo-IMDA reaction in a regioselective and stereoselective manner. Finally, the cytochrome P450 monooxygenase mpsF catalyzes the hydroxylation at C20 to yield the end product macrophasetin C. The sequence is that of Cytochrome P450 monooxygenase mpsF from Macrophomina phaseolina (strain MS6) (Charcoal rot fungus).